Consider the following 34-residue polypeptide: MSDIN-like toxin proprotein 5 (34 aa).

A propeptide spanning residues 1–10 is cleaved from the precursor; sequence MSDINTARLP. Residues 11–20 constitute a cross-link (cyclopeptide (Tyr-Pro)); that stretch reads YVVFMSFIPP. A propeptide spanning residues 21 to 34 is cleaved from the precursor; that stretch reads CVNDDIQVVLTRGE.

The protein belongs to the MSDIN fungal toxin family. Processed by the macrocyclase-peptidase enzyme POPB to yield a toxic cyclic decapeptide. POPB first removes 10 residues from the N-terminus. Conformational trapping of the remaining peptide forces the enzyme to release this intermediate rather than proceed to macrocyclization. The enzyme rebinds the remaining peptide in a different conformation and catalyzes macrocyclization of the N-terminal 10 residues.

Probable toxin that belongs to the MSDIN-like toxin family responsible for a large number of food poisoning cases and deaths. This Amanita bisporigera (Destroying angel) protein is MSDIN-like toxin proprotein 5.